The primary structure comprises 153 residues: Large ribosomal subunit protein uL13 (153 aa).

The protein belongs to the universal ribosomal protein uL13 family. In terms of assembly, part of the 50S ribosomal subunit.

Its function is as follows. This protein is one of the early assembly proteins of the 50S ribosomal subunit, although it is not seen to bind rRNA by itself. It is important during the early stages of 50S assembly. This is Large ribosomal subunit protein uL13 from Methylobacterium nodulans (strain LMG 21967 / CNCM I-2342 / ORS 2060).